Here is a 443-residue protein sequence, read N- to C-terminus: Regulator of sigma E protease (443 aa).

His21 is a Zn(2+) binding site. Glu22 is a catalytic residue. Zn(2+) is bound at residue His25. Residues 98–118 (FVIIAGPLANFIFAIFAYWVI) form a helical membrane-spanning segment. PDZ domains lie at 106-185 (ANFI…SPFN) and 198-287 (NWTF…TPVR). 2 helical membrane passes run 369-389 (LVYFLSFMALISVNLGIMNLF) and 423-443 (IGAALLLSLTVFALFNDFLRL).

Belongs to the peptidase M50B family. Interacts with RseA. It depends on Zn(2+) as a cofactor.

It is found in the cell inner membrane. A site-2 regulated intramembrane protease (S2P) that cleaves a peptide bond in the transmembrane region of RseA. Part of a regulated intramembrane proteolysis (RIP) cascade. Acts on DegS-cleaved RseA to release the cytoplasmic domain of RseA. This provides the cell with sigma-E (RpoE) activity through the proteolysis of RseA. The sequence is that of Regulator of sigma E protease (rsep) from Haemophilus influenzae (strain ATCC 51907 / DSM 11121 / KW20 / Rd).